The following is a 262-amino-acid chain: Phosphate import ATP-binding protein PstB (262 aa).

Residues 16-257 (IDVRNLNFYY…PHRKETEDYI (242 aa)) enclose the ABC transporter domain. 48–55 (GPSGCGKS) is an ATP binding site.

This sequence belongs to the ABC transporter superfamily. Phosphate importer (TC 3.A.1.7) family. The complex is composed of two ATP-binding proteins (PstB), two transmembrane proteins (PstC and PstA) and a solute-binding protein (PstS).

It is found in the cell inner membrane. It catalyses the reaction phosphate(out) + ATP + H2O = ADP + 2 phosphate(in) + H(+). Its function is as follows. Part of the ABC transporter complex PstSACB involved in phosphate import. Responsible for energy coupling to the transport system. This chain is Phosphate import ATP-binding protein PstB, found in Cupriavidus metallidurans (strain ATCC 43123 / DSM 2839 / NBRC 102507 / CH34) (Ralstonia metallidurans).